A 311-amino-acid polypeptide reads, in one-letter code: E3 ubiquitin-protein ligase RNF126 (311 aa).

Positions 13, 16, 29, and 32 each coordinate Zn(2+). A C4-type zinc finger spans residues 13-32 (CHSCTAEIIPRLPEYTCPRC). Disordered regions lie at residues 42 to 62 (ETRN…NRPS) and 95 to 133 (GTSG…RRAA). Positions 101–114 (EEPRDGESRREHQS) are enriched in basic and acidic residues. Over residues 123-133 (PRARLSTRRAA) the composition is skewed to basic residues. The RING-type zinc finger occupies 227–268 (CPVCKEDYTVGESVRQLPCNHLFHNDCIIPWLEQHDTCPVCR). The interval 274-311 (QNTATNPPGLTEMTFSSSSTSSSSSTSPTDENNAANNS) is disordered. Positions 289 to 300 (SSSSTSSSSSTS) are enriched in low complexity. A compositionally biased stretch (polar residues) spans 301–311 (PTDENNAANNS).

The protein localises to the cytoplasm. It is found in the nucleus. It carries out the reaction S-ubiquitinyl-[E2 ubiquitin-conjugating enzyme]-L-cysteine + [acceptor protein]-L-lysine = [E2 ubiquitin-conjugating enzyme]-L-cysteine + N(6)-ubiquitinyl-[acceptor protein]-L-lysine.. It participates in protein modification; protein ubiquitination. E3 ubiquitin-protein ligase that mediates ubiquitination oF target proteins. Depending on the associated E2 ligase, mediates 'Lys-27'-, 'Lys-29'-, 'Lys-48'- and/or 'Lys-63'-linked polyubiquitination of substrates. Part of a BAG6-dependent quality control process ensuring that proteins of the secretory pathway that are mislocalized to the cytosol are degraded by the proteasome. Probably acts by providing the ubiquitin ligase activity associated with the BAG6 complex and be responsible for ubiquitination of the hydrophobic mislocalized proteins and their targeting to the proteasome. The chain is E3 ubiquitin-protein ligase RNF126 from Xenopus tropicalis (Western clawed frog).